The following is a 303-amino-acid chain: Ribonuclease Z (303 aa).

Zn(2+) is bound by residues H61, H63, D65, H66, H138, D206, and H265. D65 (proton acceptor) is an active-site residue.

The protein belongs to the RNase Z family. Homodimer. It depends on Zn(2+) as a cofactor.

It carries out the reaction Endonucleolytic cleavage of RNA, removing extra 3' nucleotides from tRNA precursor, generating 3' termini of tRNAs. A 3'-hydroxy group is left at the tRNA terminus and a 5'-phosphoryl group is left at the trailer molecule.. Functionally, zinc phosphodiesterase, which displays some tRNA 3'-processing endonuclease activity. Probably involved in tRNA maturation, by removing a 3'-trailer from precursor tRNA. The chain is Ribonuclease Z from Agathobacter rectalis (strain ATCC 33656 / DSM 3377 / JCM 17463 / KCTC 5835 / VPI 0990) (Eubacterium rectale).